The sequence spans 424 residues: 5-methylthioadenosine/S-adenosylhomocysteine deaminase (424 aa).

Residues His60 and His62 each contribute to the Zn(2+) site. Positions 89 and 181 each coordinate substrate. His208 is a Zn(2+) binding site. The substrate site is built by Glu211 and Asp296. Asp296 lines the Zn(2+) pocket.

It belongs to the metallo-dependent hydrolases superfamily. MTA/SAH deaminase family. Requires Zn(2+) as cofactor.

The catalysed reaction is S-adenosyl-L-homocysteine + H2O + H(+) = S-inosyl-L-homocysteine + NH4(+). The enzyme catalyses S-methyl-5'-thioadenosine + H2O + H(+) = S-methyl-5'-thioinosine + NH4(+). Functionally, catalyzes the deamination of 5-methylthioadenosine and S-adenosyl-L-homocysteine into 5-methylthioinosine and S-inosyl-L-homocysteine, respectively. Is also able to deaminate adenosine. The polypeptide is 5-methylthioadenosine/S-adenosylhomocysteine deaminase (Thermococcus onnurineus (strain NA1)).